The following is a 338-amino-acid chain: Anthranilate phosphoribosyltransferase (338 aa).

5-phospho-alpha-D-ribose 1-diphosphate contacts are provided by residues Gly81, 84 to 85 (GD), Thr89, 91 to 94 (NIST), 109 to 117 (KHGNRNLSS), and Ala121. Anthranilate is bound at residue Gly81. Ser93 contributes to the Mg(2+) binding site. Residue Asn112 coordinates anthranilate. Residue Arg167 participates in anthranilate binding. Mg(2+)-binding residues include Asp226 and Glu227.

It belongs to the anthranilate phosphoribosyltransferase family. As to quaternary structure, homodimer. It depends on Mg(2+) as a cofactor.

It carries out the reaction N-(5-phospho-beta-D-ribosyl)anthranilate + diphosphate = 5-phospho-alpha-D-ribose 1-diphosphate + anthranilate. The protein operates within amino-acid biosynthesis; L-tryptophan biosynthesis; L-tryptophan from chorismate: step 2/5. Functionally, catalyzes the transfer of the phosphoribosyl group of 5-phosphorylribose-1-pyrophosphate (PRPP) to anthranilate to yield N-(5'-phosphoribosyl)-anthranilate (PRA). The chain is Anthranilate phosphoribosyltransferase from Cereibacter sphaeroides (strain KD131 / KCTC 12085) (Rhodobacter sphaeroides).